A 317-amino-acid polypeptide reads, in one-letter code: Ribosomal protein L11 methyltransferase (317 aa).

S-adenosyl-L-methionine contacts are provided by Thr-169, Gly-190, Asp-211, and Asn-256.

The protein belongs to the methyltransferase superfamily. PrmA family.

It is found in the cytoplasm. It catalyses the reaction L-lysyl-[protein] + 3 S-adenosyl-L-methionine = N(6),N(6),N(6)-trimethyl-L-lysyl-[protein] + 3 S-adenosyl-L-homocysteine + 3 H(+). Its function is as follows. Methylates ribosomal protein L11. In Helicobacter hepaticus (strain ATCC 51449 / 3B1), this protein is Ribosomal protein L11 methyltransferase.